The sequence spans 459 residues: tRNA modification GTPase MnmE (459 aa).

Positions 23, 88, and 127 each coordinate (6S)-5-formyl-5,6,7,8-tetrahydrofolate. The TrmE-type G domain maps to 223 to 381 (GLNTVIIGKP…LKDTIENMFA (159 aa)). Residue Asn-233 coordinates K(+). GTP-binding positions include 233-238 (NVGKSS), 252-258 (TDIPGTT), and 277-280 (DTAG). Ser-237 lines the Mg(2+) pocket. K(+) contacts are provided by Thr-252, Ile-254, and Thr-257. A Mg(2+)-binding site is contributed by Thr-258. A (6S)-5-formyl-5,6,7,8-tetrahydrofolate-binding site is contributed by Lys-459.

This sequence belongs to the TRAFAC class TrmE-Era-EngA-EngB-Septin-like GTPase superfamily. TrmE GTPase family. As to quaternary structure, homodimer. Heterotetramer of two MnmE and two MnmG subunits. Requires K(+) as cofactor.

The protein resides in the cytoplasm. Exhibits a very high intrinsic GTPase hydrolysis rate. Involved in the addition of a carboxymethylaminomethyl (cmnm) group at the wobble position (U34) of certain tRNAs, forming tRNA-cmnm(5)s(2)U34. The chain is tRNA modification GTPase MnmE from Clostridium acetobutylicum (strain ATCC 824 / DSM 792 / JCM 1419 / IAM 19013 / LMG 5710 / NBRC 13948 / NRRL B-527 / VKM B-1787 / 2291 / W).